The sequence spans 413 residues: Serine--tRNA ligase (413 aa).

221 to 223 (TAE) is an L-serine binding site. 252 to 254 (RRE) is an ATP binding site. E275 is an L-serine binding site. 339 to 342 (EVSS) serves as a coordination point for ATP. S375 contributes to the L-serine binding site.

The protein belongs to the class-II aminoacyl-tRNA synthetase family. Type-1 seryl-tRNA synthetase subfamily. In terms of assembly, homodimer. The tRNA molecule binds across the dimer.

The protein localises to the cytoplasm. The catalysed reaction is tRNA(Ser) + L-serine + ATP = L-seryl-tRNA(Ser) + AMP + diphosphate + H(+). It catalyses the reaction tRNA(Sec) + L-serine + ATP = L-seryl-tRNA(Sec) + AMP + diphosphate + H(+). It participates in aminoacyl-tRNA biosynthesis; selenocysteinyl-tRNA(Sec) biosynthesis; L-seryl-tRNA(Sec) from L-serine and tRNA(Sec): step 1/1. Its function is as follows. Catalyzes the attachment of serine to tRNA(Ser). Is also able to aminoacylate tRNA(Sec) with serine, to form the misacylated tRNA L-seryl-tRNA(Sec), which will be further converted into selenocysteinyl-tRNA(Sec). In Dehalococcoides mccartyi (strain ATCC BAA-2266 / KCTC 15142 / 195) (Dehalococcoides ethenogenes (strain 195)), this protein is Serine--tRNA ligase.